The primary structure comprises 154 residues: Large ribosomal subunit protein uL22c (154 aa).

It belongs to the universal ribosomal protein uL22 family. As to quaternary structure, part of the 50S ribosomal subunit.

It localises to the plastid. The protein localises to the chloroplast. This protein binds specifically to 23S rRNA. In terms of biological role, the globular domain of the protein is located near the polypeptide exit tunnel on the outside of the subunit, while an extended beta-hairpin is found that lines the wall of the exit tunnel in the center of the 70S ribosome. The protein is Large ribosomal subunit protein uL22c (rpl22) of Platanus occidentalis (Sycamore).